A 154-amino-acid polypeptide reads, in one-letter code: Hemiasterlin resistant protein 1 (154 aa).

Disordered regions lie at residues 1–64 and 86–109; these read MVRR…PGLM and GMFT…PAGA. Composition is skewed to low complexity over residues 7 to 28, 48 to 57, and 96 to 109; these read ASPS…SSFA, TPMGAPMGAP, and AEQA…PAGA. One can recognise a CHCH domain in the interval 116-154; the sequence is SQPCEFEWRQFVDCAQNQSDVSLCNGFNDIFKQCKARYA. 2 consecutive short sequence motifs (cx9C motif) follow at residues 119-129 and 139-149; these read CEFEWRQFVDC and CNGFNDIFKQC. Cystine bridges form between Cys119–Cys149 and Cys129–Cys139.

The sequence is that of Hemiasterlin resistant protein 1 (har-1) from Caenorhabditis elegans.